A 58-amino-acid chain; its full sequence is MSEVRVGENESLDSALRRFKKKCAEAGVLAELRKREHYESPSVRRKKKSEAARRRKRR.

The segment at 34–58 (KREHYESPSVRRKKKSEAARRRKRR) is disordered. Positions 43–58 (VRRKKKSEAARRRKRR) are enriched in basic residues.

Belongs to the bacterial ribosomal protein bS21 family.

This chain is Small ribosomal subunit protein bS21, found in Caldicellulosiruptor bescii (strain ATCC BAA-1888 / DSM 6725 / KCTC 15123 / Z-1320) (Anaerocellum thermophilum).